We begin with the raw amino-acid sequence, 656 residues long: Solute carrier family 5 member 4A (656 aa).

Over 1-28 (MASTASVSTSTASSELSSLSNNINNAAD) the chain is Cytoplasmic. Residues 29-47 (ISVIVIYFVVVMAVGVWAM) form a helical membrane-spanning segment. At 48–64 (LKTNRSTVGGFFLAGRS) the chain is on the extracellular side. The helical transmembrane segment at 65–85 (MTWWPMGASLFASNIGSGHFV) threads the bilayer. The Cytoplasmic segment spans residues 86 to 105 (GLAGTGAASGIAVTAFESHS). Residues 106-126 (FALLLVLGWIFVPIYIKAGVM) traverse the membrane as a helical segment. Residues 127–171 (TMPEYLKKRFGGKRLQIYLSILFLFICVILTISADIFSGAIFIKL) lie on the Extracellular side of the membrane. The helical transmembrane segment at 172–191 (ALGLNLYLAILILLAITAIF) threads the bilayer. Residues 192-208 (TITGGLASVIYTDTVQA) are Cytoplasmic-facing. A helical membrane pass occupies residues 209 to 229 (VIMLVGSFILMVFAFVEVGGY). The Extracellular portion of the chain corresponds to 230–270 (ESFTEKFMNAIPSVVEGDNLTINSRCYTPQPDSFHIFRDPV). N-linked (GlcNAc...) asparagine glycosylation is present at asparagine 248. A helical membrane pass occupies residues 271-291 (TGDIPWPGTAFGMPITALWYW). The Cytoplasmic portion of the chain corresponds to 292 to 314 (CINQVIVQRCLCGKNLSHVKAAC). Residues 315-334 (ILCGYLKLLPLFFMVMPGMI) form a helical membrane-spanning segment. Topologically, residues 335 to 423 (SRILYTDMVA…RKKASERELL (89 aa)) are extracellular. Residues 424 to 443 (IAGRLFVSVLIVTSILWVPI) form a helical membrane-spanning segment. Topologically, residues 444–455 (VEVSQGGQLVHY) are cytoplasmic. A helical transmembrane segment spans residues 456–476 (TEAISSYLGPPIAAVFLVAVF). Over 477-526 (CKRANEQGAFWGLMVGLVMGLIRMIAEFSYGTGSCLAPSSCPKIICGVHY) the chain is Extracellular. A helical membrane pass occupies residues 527-547 (LYFAIILFFVCILVILGVSYL). The Cytoplasmic portion of the chain corresponds to 548–634 (TKPIPDVHLH…TDTTEKPFWR (87 aa)). Residues 574-593 (DAEDKEENGADDRTEEDQTE) are disordered. A helical transmembrane segment spans residues 635-655 (TVMNVNVILLLAVAAFFYGYF).

Belongs to the sodium:solute symporter (SSF) (TC 2.A.21) family. In terms of tissue distribution, expressed in small intestine. Expressed in kidney.

The protein localises to the cell membrane. Its activity is regulated as follows. Not inhibited by phlorizin. In terms of biological role, does not function as sodium/D-glucose symporter. Generates D-glucose-induced depolarization in a pH-dependent manner, with activity in acidic conditions (pH 5) but not neutral conditions. The sequence is that of Solute carrier family 5 member 4A from Mus musculus (Mouse).